A 202-amino-acid chain; its full sequence is Orotate phosphoribosyltransferase (202 aa).

Residue Glu113–Ser121 participates in 5-phospho-alpha-D-ribose 1-diphosphate binding. Orotate contacts are provided by Thr117 and Arg145.

Belongs to the purine/pyrimidine phosphoribosyltransferase family. PyrE subfamily. As to quaternary structure, homodimer. Mg(2+) is required as a cofactor.

It carries out the reaction orotidine 5'-phosphate + diphosphate = orotate + 5-phospho-alpha-D-ribose 1-diphosphate. It participates in pyrimidine metabolism; UMP biosynthesis via de novo pathway; UMP from orotate: step 1/2. Functionally, catalyzes the transfer of a ribosyl phosphate group from 5-phosphoribose 1-diphosphate to orotate, leading to the formation of orotidine monophosphate (OMP). The sequence is that of Orotate phosphoribosyltransferase from Sulfurimonas denitrificans (strain ATCC 33889 / DSM 1251) (Thiomicrospira denitrificans (strain ATCC 33889 / DSM 1251)).